A 398-amino-acid chain; its full sequence is MERFKLNTTLSYLVAVSGGPDSMFMLNELIKMNIKEIVVCHVNYNFREDSWKDQKLVEDFCLKNNLKLEKLIINQDYSKLKENFESWARNIRYDFFVEISKKYNIQNVLIAHNRNDLVETFLLQQDRKGYVKHYGLNKTSTYKEITIVRPMLNILKSEILKSLKEENIAFVIDSTNEDKKYKRNKIRANLSESTFNDFEETIKKLNKKLEIINLEVNWYVNNNMSADELKINKNLQDQDLEFIQRTIYKWLEVIKKDFVIQNRRNKTIFEIAKNIKVSEKVFWEINIGEYSIIKDYENLFIIETKAIQPKTILIKSKEDLYLSEEFINWLDLLNAIKRNKENYPYVITNDFLTYKLNTYTFGKKTNRYLIDKKIRYKNRMLKAVVYSTKTKKILNTIK.

Position 17-22 (17-22 (SGGPDS)) interacts with ATP.

This sequence belongs to the tRNA(Ile)-lysidine synthase family.

It localises to the cytoplasm. The catalysed reaction is cytidine(34) in tRNA(Ile2) + L-lysine + ATP = lysidine(34) in tRNA(Ile2) + AMP + diphosphate + H(+). Its function is as follows. Ligates lysine onto the cytidine present at position 34 of the AUA codon-specific tRNA(Ile) that contains the anticodon CAU, in an ATP-dependent manner. Cytidine is converted to lysidine, thus changing the amino acid specificity of the tRNA from methionine to isoleucine. The protein is tRNA(Ile)-lysidine synthase of Mesoplasma florum (strain ATCC 33453 / NBRC 100688 / NCTC 11704 / L1) (Acholeplasma florum).